A 397-amino-acid chain; its full sequence is 3-ketoacyl-CoA thiolase, mitochondrial (397 aa).

The transit peptide at 1-16 directs the protein to the mitochondrion; not cleaved; it reads MALLRGVFVVAAKRTP. The residue at position 25 (Lys-25) is an N6-acetyllysine; alternate. At Lys-25 the chain carries N6-succinyllysine; alternate. Lys-45 bears the N6-succinyllysine mark. Cys-92 acts as the Acyl-thioester intermediate in catalysis. Thr-119 carries the post-translational modification Phosphothreonine. Ser-121 is subject to Phosphoserine. Position 127 is a phosphotyrosine (Tyr-127). Residue Thr-136 is modified to Phosphothreonine. N6-acetyllysine; alternate is present on Lys-137. Lys-137 is modified (N6-succinyllysine; alternate). Residue Ser-140 is modified to Phosphoserine. Lys-143, Lys-171, Lys-191, and Lys-209 each carry N6-acetyllysine; alternate. An N6-succinyllysine; alternate mark is found at Lys-143, Lys-171, Lys-191, and Lys-209. Lys-211, Lys-212, and Lys-214 each carry N6-succinyllysine. CoA contacts are provided by Arg-224 and Thr-227. The residue at position 234 (Lys-234) is an N6-acetyllysine; alternate. Position 234 is an N6-succinyllysine; alternate (Lys-234). An N6-succinyllysine modification is found at Lys-240. Lys-241 carries the post-translational modification N6-acetyllysine. Ser-251 contributes to the CoA binding site. N6-acetyllysine is present on residues Lys-269 and Lys-270. Lys-305 is subject to N6-acetyllysine; alternate. At Lys-305 the chain carries N6-succinyllysine; alternate. Ser-310 is modified (phosphoserine). Residue Lys-312 is modified to N6-acetyllysine; alternate. Lys-312 bears the N6-succinyllysine; alternate mark. Ser-333 carries the post-translational modification Phosphoserine. An N6-acetyllysine mark is found at Lys-340 and Lys-375. Catalysis depends on Cys-382, which acts as the Proton donor/acceptor.

The protein belongs to the thiolase-like superfamily. Thiolase family. Homotetramer. Interacts with BNIP3.

Its subcellular location is the mitochondrion. It catalyses the reaction an acyl-CoA + acetyl-CoA = a 3-oxoacyl-CoA + CoA. The enzyme catalyses 2 acetyl-CoA = acetoacetyl-CoA + CoA. The catalysed reaction is acetyl-CoA + H2O = acetate + CoA + H(+). It carries out the reaction propanoyl-CoA + H2O = propanoate + CoA + H(+). It catalyses the reaction butanoyl-CoA + H2O = butanoate + CoA + H(+). The enzyme catalyses hexanoyl-CoA + H2O = hexanoate + CoA + H(+). The catalysed reaction is octanoyl-CoA + H2O = octanoate + CoA + H(+). It carries out the reaction decanoyl-CoA + H2O = decanoate + CoA + H(+). It catalyses the reaction dodecanoyl-CoA + H2O = dodecanoate + CoA + H(+). The enzyme catalyses tetradecanoyl-CoA + H2O = tetradecanoate + CoA + H(+). The catalysed reaction is hexadecanoyl-CoA + H2O = hexadecanoate + CoA + H(+). It functions in the pathway lipid metabolism; fatty acid beta-oxidation. Its function is as follows. In the production of energy from fats, this is one of the enzymes that catalyzes the last step of the mitochondrial beta-oxidation pathway, an aerobic process breaking down fatty acids into acetyl-CoA. Using free coenzyme A/CoA, catalyzes the thiolytic cleavage of medium- to long-chain unbranched 3-oxoacyl-CoAs into acetyl-CoA and a fatty acyl-CoA shortened by two carbon atoms. Also catalyzes the condensation of two acetyl-CoA molecules into acetoacetyl-CoA and could be involved in the production of ketone bodies. Also displays hydrolase activity on various fatty acyl-CoAs. Thereby, could be responsible for the production of acetate in a side reaction to beta-oxidation. Abolishes BNIP3-mediated apoptosis and mitochondrial damage. The chain is 3-ketoacyl-CoA thiolase, mitochondrial (ACAA2) from Homo sapiens (Human).